The chain runs to 39 residues: Phospholipase A2 (39 aa).

The active site involves histidine 36.

Belongs to the phospholipase A2 family. Group III subfamily. The cofactor is Ca(2+). Expressed by the venom gland.

The protein resides in the secreted. The enzyme catalyses a 1,2-diacyl-sn-glycero-3-phosphocholine + H2O = a 1-acyl-sn-glycero-3-phosphocholine + a fatty acid + H(+). Functionally, PLA2 catalyzes the calcium-dependent hydrolysis of the 2-acyl groups in 3-sn-phosphoglycerides. The protein is Phospholipase A2 of Heloderma horridum horridum (Mexican beaded lizard).